The following is a 511-amino-acid chain: Alpha-amylase 2B (511 aa).

The first 15 residues, 1–15 (MKFFLLLFTIGFCWA), serve as a signal peptide directing secretion. Residue Gln-16 is modified to Pyrrolidone carboxylic acid. 3 disulfide bridges follow: Cys-43-Cys-101, Cys-85-Cys-130, and Cys-156-Cys-175. The Ca(2+) site is built by Asn-115, Arg-173, and Asp-182. Arg-210 contacts chloride. Asp-212 acts as the Nucleophile in catalysis. His-216 serves as a coordination point for Ca(2+). Catalysis depends on Glu-248, which acts as the Proton donor. Residues Asn-313 and Arg-352 each coordinate chloride. Cystine bridges form between Cys-393–Cys-399 and Cys-465–Cys-477.

This sequence belongs to the glycosyl hydrolase 13 family. As to quaternary structure, monomer. It depends on Ca(2+) as a cofactor. The cofactor is chloride.

Its subcellular location is the secreted. The catalysed reaction is Endohydrolysis of (1-&gt;4)-alpha-D-glucosidic linkages in polysaccharides containing three or more (1-&gt;4)-alpha-linked D-glucose units.. This chain is Alpha-amylase 2B (AMY2B), found in Homo sapiens (Human).